The chain runs to 290 residues: Lysine export transcriptional regulatory protein LysG (290 aa).

Residues 1–57 (MNPIHLDTLLTIIDEGSFENASLALSISPSAVSQRIKALEKSVGRVLVSRTQPAVAT) form the HTH lysR-type domain. A DNA-binding region (H-T-H motif) is located at residues 18–37 (FENASLALSISPSAVSQRIK).

The protein belongs to the LysR transcriptional regulatory family.

In terms of biological role, positively regulates the expression of the exporter LysE. This chain is Lysine export transcriptional regulatory protein LysG (lysG), found in Corynebacterium efficiens (strain DSM 44549 / YS-314 / AJ 12310 / JCM 11189 / NBRC 100395).